Reading from the N-terminus, the 334-residue chain is MKKNQFLKESDVTAESVFFMKRRQVLKALGISAAALSLPHAAHADLLSWFKGNDRPPAPAGKALEFSKPAAWQNNLPLTPADKVSGYNNFYEFGLDKADPAANAGSLKTDPWTLKISGEVAKPLTLDHDDLTRRFPLEERIYRMRCVEAWSMVVPWIGFPLHKLLALAEPTSNAKYVAFETIYAPEQMPGQQDRFIGGGLKYPYVEGLRLDEAMHPLTLMTVGVYGKALPPQNGAPVRLIVPWKYGFKGIKSIVSIKLTRERPPTTWNLAAPDEYGFYANVNPHVDHPRWSQATERFIGSGGILDVQRQPTLLFNGYADQVASLYRGLDLRENF.

The tat-type signal signal peptide spans M1–A44. Residues N88, Y91–E92, C146, T181, N233, R238, and G249–K251 contribute to the Mo-molybdopterin site.

The protein belongs to the MsrP family. In terms of assembly, heterodimer of a catalytic subunit (MsrP) and a heme-binding subunit (MsrQ). It depends on Mo-molybdopterin as a cofactor. Post-translationally, predicted to be exported by the Tat system. The position of the signal peptide cleavage has not been experimentally proven.

It is found in the periplasm. It carries out the reaction L-methionyl-[protein] + a quinone + H2O = L-methionyl-(S)-S-oxide-[protein] + a quinol. It catalyses the reaction L-methionyl-[protein] + a quinone + H2O = L-methionyl-(R)-S-oxide-[protein] + a quinol. Its function is as follows. Part of the MsrPQ system that repairs oxidized periplasmic proteins containing methionine sulfoxide residues (Met-O), using respiratory chain electrons. Thus protects these proteins from oxidative-stress damage caused by reactive species of oxygen and chlorine generated by the host defense mechanisms. MsrPQ is essential for the maintenance of envelope integrity under bleach stress, rescuing a wide series of structurally unrelated periplasmic proteins from methionine oxidation, including the primary periplasmic chaperone SurA and the lipoprotein Pal. The catalytic subunit MsrP is non-stereospecific, being able to reduce both (R-) and (S-) diastereoisomers of methionine sulfoxide. The chain is Protein-methionine-sulfoxide reductase catalytic subunit MsrP from Escherichia coli O157:H7.